A 244-amino-acid polypeptide reads, in one-letter code: Large ribosomal subunit protein uL3 (244 aa).

The protein belongs to the universal ribosomal protein uL3 family. Part of the 50S ribosomal subunit. Forms a cluster with proteins L14 and L19.

In terms of biological role, one of the primary rRNA binding proteins, it binds directly near the 3'-end of the 23S rRNA, where it nucleates assembly of the 50S subunit. This Aquifex pyrophilus protein is Large ribosomal subunit protein uL3.